The sequence spans 1384 residues: DNA-directed RNA polymerase subunit beta (1384 aa).

It belongs to the RNA polymerase beta chain family. The RNAP catalytic core consists of 2 alpha, 1 beta, 1 beta' and 1 omega subunit. When a sigma factor is associated with the core the holoenzyme is formed, which can initiate transcription.

The catalysed reaction is RNA(n) + a ribonucleoside 5'-triphosphate = RNA(n+1) + diphosphate. DNA-dependent RNA polymerase catalyzes the transcription of DNA into RNA using the four ribonucleoside triphosphates as substrates. The sequence is that of DNA-directed RNA polymerase subunit beta from Xylella fastidiosa (strain M23).